Here is a 1407-residue protein sequence, read N- to C-terminus: DNA-directed RNA polymerase subunit beta' (1407 aa).

The Zn(2+) site is built by cysteine 70, cysteine 72, cysteine 85, and cysteine 88. Mg(2+) contacts are provided by aspartate 460, aspartate 462, and aspartate 464. Residues cysteine 814, cysteine 888, cysteine 895, and cysteine 898 each coordinate Zn(2+).

Belongs to the RNA polymerase beta' chain family. As to quaternary structure, the RNAP catalytic core consists of 2 alpha, 1 beta, 1 beta' and 1 omega subunit. When a sigma factor is associated with the core the holoenzyme is formed, which can initiate transcription. Mg(2+) is required as a cofactor. Requires Zn(2+) as cofactor.

The enzyme catalyses RNA(n) + a ribonucleoside 5'-triphosphate = RNA(n+1) + diphosphate. Functionally, DNA-dependent RNA polymerase catalyzes the transcription of DNA into RNA using the four ribonucleoside triphosphates as substrates. The protein is DNA-directed RNA polymerase subunit beta' of Citrobacter koseri (strain ATCC BAA-895 / CDC 4225-83 / SGSC4696).